The chain runs to 512 residues: Sodium/proline symporter (512 aa).

Transmembrane regions (helical) follow at residues 16-36, 54-74, 85-105, 139-159, 174-194, 200-220, 240-260, 286-306, 327-347, 381-401, 410-430, 438-458, and 467-487; these read WQTY…GFYG, IGPY…WMIM, LSAM…YFVV, IISG…GFVS, FGLI…GYLA, FFQG…AMMN, LFKG…LGYF, ISWM…GIAF, VLFH…AIMS, FVMI…AIAW, LVGN…LFAL, AGAV…IAWI, and IFGL…TYVV.

It belongs to the sodium:solute symporter (SSF) (TC 2.A.21) family.

It localises to the cell membrane. It catalyses the reaction L-proline(in) + Na(+)(in) = L-proline(out) + Na(+)(out). Catalyzes the sodium-dependent uptake of extracellular L-proline. Since most S.aureus strains are L-proline auxotrophs, this transporter may aid the bacterial persistence during an infection of tissues with low proline concentrations. In Staphylococcus aureus (strain Newman), this protein is Sodium/proline symporter (putP).